The primary structure comprises 629 residues: tRNA uridine 5-carboxymethylaminomethyl modification enzyme MnmG (629 aa).

13-18 (GGGHAG) contacts FAD. 273–287 (GPRYCPSIEDKIHRF) contacts NAD(+).

The protein belongs to the MnmG family. Homodimer. Heterotetramer of two MnmE and two MnmG subunits. FAD serves as cofactor.

Its subcellular location is the cytoplasm. Its function is as follows. NAD-binding protein involved in the addition of a carboxymethylaminomethyl (cmnm) group at the wobble position (U34) of certain tRNAs, forming tRNA-cmnm(5)s(2)U34. This Shewanella baltica (strain OS155 / ATCC BAA-1091) protein is tRNA uridine 5-carboxymethylaminomethyl modification enzyme MnmG.